Here is a 185-residue protein sequence, read N- to C-terminus: Ribosome-recycling factor (185 aa).

This sequence belongs to the RRF family.

The protein localises to the cytoplasm. In terms of biological role, responsible for the release of ribosomes from messenger RNA at the termination of protein biosynthesis. May increase the efficiency of translation by recycling ribosomes from one round of translation to another. The polypeptide is Ribosome-recycling factor (Shewanella sediminis (strain HAW-EB3)).